The chain runs to 120 residues: Large ribosomal subunit protein bL20 (120 aa).

It belongs to the bacterial ribosomal protein bL20 family.

Its function is as follows. Binds directly to 23S ribosomal RNA and is necessary for the in vitro assembly process of the 50S ribosomal subunit. It is not involved in the protein synthesizing functions of that subunit. The protein is Large ribosomal subunit protein bL20 of Mesoplasma florum (strain ATCC 33453 / NBRC 100688 / NCTC 11704 / L1) (Acholeplasma florum).